A 279-amino-acid chain; its full sequence is Large ribosomal subunit protein uL2 (279 aa).

Disordered regions lie at residues 29–53 (PEKSLLRPLSKSGGRNNQGRITTRH) and 224–279 (VAMN…KKRK). Over residues 253–268 (KEGRTRHPNKESDKLI) the composition is skewed to basic and acidic residues. Residues 269–279 (VRRRNAGKKRK) show a composition bias toward basic residues.

It belongs to the universal ribosomal protein uL2 family. In terms of assembly, part of the 50S ribosomal subunit. Forms a bridge to the 30S subunit in the 70S ribosome.

One of the primary rRNA binding proteins. Required for association of the 30S and 50S subunits to form the 70S ribosome, for tRNA binding and peptide bond formation. It has been suggested to have peptidyltransferase activity; this is somewhat controversial. Makes several contacts with the 16S rRNA in the 70S ribosome. The protein is Large ribosomal subunit protein uL2 of Leifsonia xyli subsp. xyli (strain CTCB07).